The sequence spans 240 residues: Splicing factor U2AF 35 kDa subunit (240 aa).

Position 2 is an N-acetylalanine (Ala-2). The segment at 12–40 adopts a C3H1-type 1 zinc-finger fold; that stretch reads EKDKVNCSFYFKIGACRHGDRCSRLHNKP. Lys-39 bears the N6-methyllysine mark. A phosphoserine mark is found at Ser-61 and Ser-145. The region spanning 65-147 is the RRM domain; it reads LRCAVSDVEM…QPIHAELSPV (83 aa). The segment at 149–176 adopts a C3H1-type 2 zinc-finger fold; that stretch reads DFREACCRQYEMGECTRGGFCNFMHLKP. Arg-165 is subject to Omega-N-methylarginine. Residues 183–240 form a disordered region; it reads RELYGRRRKKHRSRSRSRERRSRSRDRGRGGGGGGGGGGGGRERDRRRSRDRERSGRF. Positions 188–208 are enriched in basic residues; that stretch reads RRRKKHRSRSRSRERRSRSRD. Residues 212-222 are compositionally biased toward gly residues; that stretch reads GGGGGGGGGGG. Residues 223 to 240 show a composition bias toward basic and acidic residues; the sequence is GRERDRRRSRDRERSGRF.

This sequence belongs to the splicing factor SR family. As to quaternary structure, identified in the spliceosome C complex. Heterodimer with U2AF2. Interacts (via RS domain) with PHF5A (via N-terminus). Interacts with ZRANB2. Interacts with SDE2. Interacts with SF3B1.

The protein localises to the nucleus. It localises to the nucleus speckle. Functionally, plays a critical role in both constitutive and enhancer-dependent splicing by mediating protein-protein interactions and protein-RNA interactions required for accurate 3'-splice site selection. Recruits U2 snRNP to the branch point. Directly mediates interactions between U2AF2 and proteins bound to the enhancers and thus may function as a bridge between U2AF2 and the enhancer complex to recruit it to the adjacent intron. The sequence is that of Splicing factor U2AF 35 kDa subunit (U2AF1) from Homo sapiens (Human).